A 435-amino-acid polypeptide reads, in one-letter code: Adenylosuccinate synthetase (435 aa).

Residues 17–23 (GDEGKGK) and 45–47 (GHT) contribute to the GTP site. Aspartate 18 functions as the Proton acceptor in the catalytic mechanism. Mg(2+) contacts are provided by aspartate 18 and glycine 45. Residues 18 to 21 (DEGK), 43 to 46 (NAGH), threonine 134, arginine 148, glutamine 229, threonine 244, and arginine 308 each bind IMP. Histidine 46 (proton donor) is an active-site residue. 304-310 (SVTGRPR) contributes to the substrate binding site. GTP is bound by residues arginine 310, 336-338 (KLD), and 418-420 (STG).

The protein belongs to the adenylosuccinate synthetase family. Homodimer. The cofactor is Mg(2+).

The protein resides in the cytoplasm. The catalysed reaction is IMP + L-aspartate + GTP = N(6)-(1,2-dicarboxyethyl)-AMP + GDP + phosphate + 2 H(+). The protein operates within purine metabolism; AMP biosynthesis via de novo pathway; AMP from IMP: step 1/2. In terms of biological role, plays an important role in the de novo pathway of purine nucleotide biosynthesis. Catalyzes the first committed step in the biosynthesis of AMP from IMP. The chain is Adenylosuccinate synthetase from Bordetella parapertussis (strain 12822 / ATCC BAA-587 / NCTC 13253).